Reading from the N-terminus, the 405-residue chain is Elongation factor Tu (405 aa).

In terms of domain architecture, tr-type G spans 10–215; that stretch reads KPHVNVGTIG…AIDAYIPTPE (206 aa). The segment at 19–26 is G1; sequence GHVDHGKT. 19–26 lines the GTP pocket; sequence GHVDHGKT. Thr26 provides a ligand contact to Mg(2+). The interval 61 to 65 is G2; that stretch reads GITIN. A G3 region spans residues 82–85; it reads DCPG. Residues 82 to 86 and 137 to 140 contribute to the GTP site; these read DCPGH and NKVD. The interval 137–140 is G4; it reads NKVD. Positions 175-177 are G5; sequence SAL.

It belongs to the TRAFAC class translation factor GTPase superfamily. Classic translation factor GTPase family. EF-Tu/EF-1A subfamily. In terms of assembly, monomer.

It localises to the cytoplasm. The catalysed reaction is GTP + H2O = GDP + phosphate + H(+). Functionally, GTP hydrolase that promotes the GTP-dependent binding of aminoacyl-tRNA to the A-site of ribosomes during protein biosynthesis. This chain is Elongation factor Tu, found in Deinococcus geothermalis (strain DSM 11300 / CIP 105573 / AG-3a).